The following is a 75-amino-acid chain: Rugosin-LK2 (75 aa).

Positions methionine 1 to glycine 24 are cleaved as a signal peptide. Positions glutamate 25–glutamate 40 are excised as a propeptide.

As to expression, expressed by the skin glands.

The protein localises to the secreted. Has antimicrobial activity against Gram-positive bacteria S.aureus ATCC 2592 (MIC=10.0 uM), S.aureus ATCC 43300 (MIC=10.0 uM) and B.subtilis (MIC=30.0 uM), against Gram-negative bacteria E.coli ML-35P (MIC=10.0 uM), P.aeruginosa PA01 (MIC=2.5 uM) and P.aeruginosa ATCC 27853 (MIC=2.5 uM) and against fungus C.albicans ATCC 2002 (MIC=10.0 uM). This chain is Rugosin-LK2, found in Limnonectes kuhlii (Kuhl's Creek frog).